A 213-amino-acid chain; its full sequence is Protein-L-isoaspartate O-methyltransferase (213 aa).

The active site involves Ser-64.

The protein belongs to the methyltransferase superfamily. L-isoaspartyl/D-aspartyl protein methyltransferase family.

Its subcellular location is the cytoplasm. It carries out the reaction [protein]-L-isoaspartate + S-adenosyl-L-methionine = [protein]-L-isoaspartate alpha-methyl ester + S-adenosyl-L-homocysteine. Functionally, catalyzes the methyl esterification of L-isoaspartyl residues in peptides and proteins that result from spontaneous decomposition of normal L-aspartyl and L-asparaginyl residues. It plays a role in the repair and/or degradation of damaged proteins. The chain is Protein-L-isoaspartate O-methyltransferase from Flavobacterium johnsoniae (strain ATCC 17061 / DSM 2064 / JCM 8514 / BCRC 14874 / CCUG 350202 / NBRC 14942 / NCIMB 11054 / UW101) (Cytophaga johnsonae).